A 227-amino-acid polypeptide reads, in one-letter code: Cytochrome c oxidase subunit 2 (227 aa).

Met-1 bears the N-formylmethionine mark. Topologically, residues 1–14 (MAYPMQLGFQDATS) are mitochondrial intermembrane. The chain crosses the membrane as a helical span at residues 15–45 (PIMEELLHFHDHTLMIVFLISSLVLYIISLM). Topologically, residues 46 to 59 (LTTKLTHTSTMDAQ) are mitochondrial matrix. The chain crosses the membrane as a helical span at residues 60–87 (EVETIWTILPAIILILIALPSLRILYMM). The Mitochondrial intermembrane portion of the chain corresponds to 88-227 (DEINNPSLTV…YFEKWSASML (140 aa)). The Cu cation site is built by His-161, Cys-196, Glu-198, Cys-200, His-204, and Met-207. Glu-198 provides a ligand contact to Mg(2+). Tyr-218 carries the phosphotyrosine modification.

Belongs to the cytochrome c oxidase subunit 2 family. Component of the cytochrome c oxidase (complex IV, CIV), a multisubunit enzyme composed of 14 subunits. The complex is composed of a catalytic core of 3 subunits MT-CO1, MT-CO2 and MT-CO3, encoded in the mitochondrial DNA, and 11 supernumerary subunits COX4I, COX5A, COX5B, COX6A, COX6B, COX6C, COX7A, COX7B, COX7C, COX8 and NDUFA4, which are encoded in the nuclear genome. The complex exists as a monomer or a dimer and forms supercomplexes (SCs) in the inner mitochondrial membrane with NADH-ubiquinone oxidoreductase (complex I, CI) and ubiquinol-cytochrome c oxidoreductase (cytochrome b-c1 complex, complex III, CIII), resulting in different assemblies (supercomplex SCI(1)III(2)IV(1) and megacomplex MCI(2)III(2)IV(2)). Found in a complex with TMEM177, COA6, COX18, COX20, SCO1 and SCO2. Interacts with TMEM177 in a COX20-dependent manner. Interacts with COX20. Interacts with COX16. Cu cation serves as cofactor.

The protein localises to the mitochondrion inner membrane. The enzyme catalyses 4 Fe(II)-[cytochrome c] + O2 + 8 H(+)(in) = 4 Fe(III)-[cytochrome c] + 2 H2O + 4 H(+)(out). In terms of biological role, component of the cytochrome c oxidase, the last enzyme in the mitochondrial electron transport chain which drives oxidative phosphorylation. The respiratory chain contains 3 multisubunit complexes succinate dehydrogenase (complex II, CII), ubiquinol-cytochrome c oxidoreductase (cytochrome b-c1 complex, complex III, CIII) and cytochrome c oxidase (complex IV, CIV), that cooperate to transfer electrons derived from NADH and succinate to molecular oxygen, creating an electrochemical gradient over the inner membrane that drives transmembrane transport and the ATP synthase. Cytochrome c oxidase is the component of the respiratory chain that catalyzes the reduction of oxygen to water. Electrons originating from reduced cytochrome c in the intermembrane space (IMS) are transferred via the dinuclear copper A center (CU(A)) of subunit 2 and heme A of subunit 1 to the active site in subunit 1, a binuclear center (BNC) formed by heme A3 and copper B (CU(B)). The BNC reduces molecular oxygen to 2 water molecules using 4 electrons from cytochrome c in the IMS and 4 protons from the mitochondrial matrix. This is Cytochrome c oxidase subunit 2 (MT-CO2) from Bos indicus (Zebu).